A 403-amino-acid chain; its full sequence is Cystinosin homolog (403 aa).

Residues 1–122 (MKLPVSILFF…YSRITVIRSH (122 aa)) are Lumenal-facing. 4 N-linked (GlcNAc...) asparagine glycosylation sites follow: asparagine 45, asparagine 52, asparagine 78, and asparagine 96. A helical membrane pass occupies residues 123–143 (WLAILIQIVGWTYFAAWSVSF). The 67-residue stretch at 124 to 190 (LAILIQIVGW…MYYNSHVKNI (67 aa)) folds into the PQ-loop 1 domain. Over 144–162 (YPQMYLNFKRKSVVGLNFD) the chain is Cytoplasmic. A helical membrane pass occupies residues 163–183 (FLSLNLVGFGAYAMFNLLMYY). At 184 to 206 (NSHVKNIYSMENPRSPPPVLLND) the chain is on the lumenal side. A helical membrane pass occupies residues 207-227 (VVFAVHAFLACFVTILQCIFY). Residues 228–237 (ERDQQRISTK) are Cytoplasmic-facing. Residues 238-258 (CIILIIGLVSFGFVSVVVTVL) traverse the membrane as a helical segment. The Lumenal portion of the chain corresponds to 259–260 (NK). The chain crosses the membrane as a helical span at residues 261-283 (ITILDFVVSLSYIKMAVTCCKYF). Positions 266–326 (FVVSLSYIKM…MVLQAINVND (61 aa)) constitute a PQ-loop 2 domain. Topologically, residues 284–294 (PQAYFNYQRKS) are cytoplasmic. The chain crosses the membrane as a helical span at residues 295-315 (TVGWSIGNILLDFTGGSLDIL). Residues 316-336 (QMVLQAINVNDWSAFYANPVK) lie on the Lumenal side of the membrane. A helical transmembrane segment spans residues 337 to 357 (FGLGFVSIFFDIIFMIQHYAL). The Cytoplasmic portion of the chain corresponds to 358–403 (YPDAEVPHNEYHGVDNPDPDSIVRDAEHGAADNESMESTDPIIVHD). A compositionally biased stretch (basic and acidic residues) spans 374–388 (PDPDSIVRDAEHGAA). The interval 374–403 (PDPDSIVRDAEHGAADNESMESTDPIIVHD) is disordered.

It belongs to the cystinosin family.

The protein resides in the lysosome membrane. The protein localises to the cytoplasmic vesicle. It localises to the phagosome. The catalysed reaction is L-cystine(out) + H(+)(out) = L-cystine(in) + H(+)(in). Its function is as follows. Cystine/H(+) symporter that mediates export of cystine, the oxidized dimer of cysteine, from lysosomes. May play a role in the degradation of engulfed apoptotic cells. The chain is Cystinosin homolog (ctns-1) from Caenorhabditis briggsae.